Reading from the N-terminus, the 85-residue chain is MERGNRKSRIGVVVSNKMAKTVVVKVERRVADPKYGKIVKRAEKYKAHDENNACQIGDKVRIVETRPMSKDKRWRIAETLEKAEV.

The protein belongs to the universal ribosomal protein uS17 family. In terms of assembly, part of the 30S ribosomal subunit.

Its function is as follows. One of the primary rRNA binding proteins, it binds specifically to the 5'-end of 16S ribosomal RNA. This is Small ribosomal subunit protein uS17 from Anaeromyxobacter sp. (strain Fw109-5).